We begin with the raw amino-acid sequence, 65 residues long: MRCLPVFIILLLLASTAAVDVAGSKLKRRLERKPYQGSQAYVKKTAFGLRLCCKRHHGCHPCGRT.

Residues 1-18 (MRCLPVFIILLLLASTAA) form the signal peptide. Positions 19–49 (VDVAGSKLKRRLERKPYQGSQAYVKKTAFGL) are excised as a propeptide. 2 disulfide bridges follow: Cys-52/Cys-62 and Cys-53/Cys-59. A 4-hydroxyproline modification is found at Pro-61.

The protein belongs to the conotoxin T superfamily. Expressed by the venom duct.

The protein resides in the secreted. Probable neurotoxin with unknown target. Possibly targets ion channels. This chain is Conotoxin Cal1.5, found in Californiconus californicus (California cone).